The sequence spans 143 residues: Pathogenesis-related protein P2 (143 aa).

A signal peptide spans 1–23 (MERVNKLCVAFFVINMMMAVAAA). The 120-residue stretch at 24–143 (QSATNVRATY…LNVNYEFVNC (120 aa)) folds into the Barwin domain. Cystine bridges form between C52–C84, C73–C107, and C87–C143.

The protein localises to the secreted. It is found in the cell wall. In Solanum lycopersicum (Tomato), this protein is Pathogenesis-related protein P2.